A 153-amino-acid polypeptide reads, in one-letter code: Putative trans-acting regulator pXO2-62/BXB0076/GBAA_pXO2_0076 (153 aa).

This sequence belongs to the AtxA/AcpA family.

This Bacillus anthracis protein is Putative trans-acting regulator pXO2-62/BXB0076/GBAA_pXO2_0076.